A 641-amino-acid polypeptide reads, in one-letter code: MGKIIGIDLGTTNSCVSIMDGGKARVIENSEGDRTTPSIVAYTKDGEVLVGASAKRQAVTNPKNTFYAVKRLIGRKFTDGEVQKDISHVPYGILAHDNGDAWVQTSDAKRMAPQEISARVLEKMKKTAEDFLGEKVTEAVITVPAYFNDSQRQATKDAGRIAGLDVKRIINEPTAAALAYGLDKNGGDRKIAVYDLGGGTFDVSIIEIAEVDGEKQFEVLATNGDTFLGGEDFDNRVIEYLVDEFNKDQGIDLRKDPLALQRLKDAAERAKIELSSSQQTEVNLPYVTADASGPKHLNIKLTRAKLEALVEDLVKKSIEPCRTALNDAGLRASDINEVILVGGQTRMPKVQQAVADFFGKEPRKDVNPDEAVAVGAAIQGGVLAGDVKDVLLLDVTPLSLGIETMGGVFTKIIEKNTTIPTKASQTFSTAEDNQSAVTVHVLQGEREQARFNKSLAKFDLSGIEPAPRGMPQVEVSFDIDANGILHVSAKDKKTNKEQKVEIKAGSGLSDEEIQRMVADAEANREEDKKFQELVQARNQADGLIHATRTAITEHGSKVGGDVIGKVEAALSDLETAMKGDDKAQIEARTKTLEEAGQSLYAAAAAAEQGGNADAASGNAQASKAADDVVDAEFTEVKDDKK.

Thr-200 is subject to Phosphothreonine; by autocatalysis. Positions 606–623 (AEQGGNADAASGNAQASK) are enriched in low complexity. A disordered region spans residues 606-627 (AEQGGNADAASGNAQASKAADD).

The protein belongs to the heat shock protein 70 family.

Its function is as follows. Acts as a chaperone. This chain is Chaperone protein DnaK, found in Xanthomonas euvesicatoria pv. vesicatoria (strain 85-10) (Xanthomonas campestris pv. vesicatoria).